A 740-amino-acid polypeptide reads, in one-letter code: 1,4-alpha-glucan branching enzyme GlgB (740 aa).

Asp-419 (nucleophile) is an active-site residue. Glu-472 (proton donor) is an active-site residue.

It belongs to the glycosyl hydrolase 13 family. GlgB subfamily. Monomer.

The enzyme catalyses Transfers a segment of a (1-&gt;4)-alpha-D-glucan chain to a primary hydroxy group in a similar glucan chain.. It participates in glycan biosynthesis; glycogen biosynthesis. Catalyzes the formation of the alpha-1,6-glucosidic linkages in glycogen by scission of a 1,4-alpha-linked oligosaccharide from growing alpha-1,4-glucan chains and the subsequent attachment of the oligosaccharide to the alpha-1,6 position. The sequence is that of 1,4-alpha-glucan branching enzyme GlgB from Paramagnetospirillum magneticum (strain ATCC 700264 / AMB-1) (Magnetospirillum magneticum).